We begin with the raw amino-acid sequence, 346 residues long: Anthranilate phosphoribosyltransferase (346 aa).

Residues Gly81, 84–85 (GD), 91–94 (NVST), 109–117 (KHGNRSVSS), and Ser121 each bind 5-phospho-alpha-D-ribose 1-diphosphate. An anthranilate-binding site is contributed by Gly81. Ser93 serves as a coordination point for Mg(2+). Position 112 (Asn112) interacts with anthranilate. Arg167 lines the anthranilate pocket. Residues Asp226 and Glu227 each coordinate Mg(2+).

It belongs to the anthranilate phosphoribosyltransferase family. As to quaternary structure, homodimer. Mg(2+) is required as a cofactor.

The enzyme catalyses N-(5-phospho-beta-D-ribosyl)anthranilate + diphosphate = 5-phospho-alpha-D-ribose 1-diphosphate + anthranilate. It functions in the pathway amino-acid biosynthesis; L-tryptophan biosynthesis; L-tryptophan from chorismate: step 2/5. Functionally, catalyzes the transfer of the phosphoribosyl group of 5-phosphorylribose-1-pyrophosphate (PRPP) to anthranilate to yield N-(5'-phosphoribosyl)-anthranilate (PRA). This is Anthranilate phosphoribosyltransferase from Hahella chejuensis (strain KCTC 2396).